We begin with the raw amino-acid sequence, 372 residues long: Putative F-box/kelch-repeat protein At3g22730 (372 aa).

The 50-residue stretch at 1 to 50 (MMMSDLSLDLVEEILSRVPATSLKRLRSTCKLWNALFKNPGFTKKQFLKA) folds into the F-box domain. Kelch repeat units follow at residues 155–204 (ILRC…SFKG), 245–293 (ALSV…PIRG), and 324–372 (KVYI…IIKE).

The protein is Putative F-box/kelch-repeat protein At3g22730 of Arabidopsis thaliana (Mouse-ear cress).